A 147-amino-acid chain; its full sequence is MNCFSYFFLVIILCAGLNNAKFNEKNSVIFKSSLGPKKLLRIHCTSEHDDTDYVYLRHGQTYAFSFHDSVLKTIFDCELKQGSSYYNYNFYARFRAYKGGGLIVHYGKKNFWDAREDGIYFTHGKETPKLEYKWIPGDPSMRVESPL.

Residues 1 to 20 (MNCFSYFFLVIILCAGLNNA) form the signal peptide.

It belongs to the plant self-incompatibility (S1) protein family.

The protein localises to the secreted. The polypeptide is S-protein homolog 10 (Arabidopsis thaliana (Mouse-ear cress)).